Reading from the N-terminus, the 206-residue chain is Emopamil-binding protein-like (206 aa).

The next 4 membrane-spanning stretches (helical) occupy residues 10 to 30 (EAGS…ALGL), 42 to 62 (WVLA…GAFV), 101 to 121 (LEIL…YAIV), and 165 to 185 (LWVY…LLLW). In terms of domain architecture, EXPERA spans 39-184 (VERWVLAWLC…LWVLIPGLLL (146 aa)).

Belongs to the EBP family. As to quaternary structure, homodimer.

It is found in the endoplasmic reticulum membrane. Its function is as follows. Does not possess sterol isomerase activity and does not bind sigma ligands. This Mus musculus (Mouse) protein is Emopamil-binding protein-like (Ebpl).